The following is a 426-amino-acid chain: Dihydroorotase (426 aa).

Zn(2+) is bound by residues H58 and H60. Residues 60-62 (HLR) and N92 contribute to the substrate site. Positions 150, 177, and 230 each coordinate Zn(2+). N276 is a binding site for substrate. D303 lines the Zn(2+) pocket. D303 is an active-site residue. Residues H307 and 321–322 (FG) contribute to the substrate site.

It belongs to the metallo-dependent hydrolases superfamily. DHOase family. Class I DHOase subfamily. It depends on Zn(2+) as a cofactor.

The enzyme catalyses (S)-dihydroorotate + H2O = N-carbamoyl-L-aspartate + H(+). The protein operates within pyrimidine metabolism; UMP biosynthesis via de novo pathway; (S)-dihydroorotate from bicarbonate: step 3/3. Functionally, catalyzes the reversible cyclization of carbamoyl aspartate to dihydroorotate. This chain is Dihydroorotase, found in Listeria monocytogenes serovar 1/2a (strain ATCC BAA-679 / EGD-e).